A 436-amino-acid polypeptide reads, in one-letter code: GTPase Der (436 aa).

2 EngA-type G domains span residues 4–167 and 176–351; these read PIVA…KEEE and IRLS…ENHK. GTP-binding positions include 10 to 17, 57 to 61, 119 to 122, 182 to 189, 229 to 233, and 294 to 297; these read GRPNVGKS, DTGGI, NKVD, DTAGM, and NKWD. The 85-residue stretch at 352–436 folds into the KH-like domain; that stretch reads KRVQSSTLNE…PVHIIARKRN (85 aa).

The protein belongs to the TRAFAC class TrmE-Era-EngA-EngB-Septin-like GTPase superfamily. EngA (Der) GTPase family. Associates with the 50S ribosomal subunit.

Functionally, GTPase that plays an essential role in the late steps of ribosome biogenesis. The sequence is that of GTPase Der from Staphylococcus saprophyticus subsp. saprophyticus (strain ATCC 15305 / DSM 20229 / NCIMB 8711 / NCTC 7292 / S-41).